The primary structure comprises 1143 residues: Major DNA-binding protein (1143 aa).

The interval 1140–1143 (RMRL) is required for nuclear localization.

Belongs to the herpesviridae major DNA-binding protein family. Homooligomers. Forms double-helical filaments necessary for the formation of replication compartments within the host nucleus. Interacts with the origin-binding protein. Interacts with the helicase primase complex; this interaction stimulates primer synthesis activity of the helicase-primase complex. Interacts with the DNA polymerase. Interacts with the alkaline exonuclease; this interaction increases its nuclease processivity.

It is found in the host nucleus. In terms of biological role, plays several crucial roles in viral infection. Participates in the opening of the viral DNA origin to initiate replication by interacting with the origin-binding protein. May disrupt loops, hairpins and other secondary structures present on ssDNA to reduce and eliminate pausing of viral DNA polymerase at specific sites during elongation. Promotes viral DNA recombination by performing strand-transfer, characterized by the ability to transfer a DNA strand from a linear duplex to a complementary single-stranded DNA circle. Can also catalyze the renaturation of complementary single strands. Additionally, reorganizes the host cell nucleus, leading to the formation of prereplicative sites and replication compartments. This process is driven by the protein which can form double-helical filaments in the absence of DNA. In Elephantid herpesvirus 1 (isolate Asian elephant/Berlin/Kiba/1998) (EIHV-1), this protein is Major DNA-binding protein.